The following is a 269-amino-acid chain: 5'-nucleotidase SurE (269 aa).

Positions 11, 12, 43, and 101 each coordinate a divalent metal cation.

It belongs to the SurE nucleotidase family. The cofactor is a divalent metal cation.

It is found in the cytoplasm. It catalyses the reaction a ribonucleoside 5'-phosphate + H2O = a ribonucleoside + phosphate. In terms of biological role, nucleotidase that shows phosphatase activity on nucleoside 5'-monophosphates. This Prochlorococcus marinus subsp. pastoris (strain CCMP1986 / NIES-2087 / MED4) protein is 5'-nucleotidase SurE.